The following is a 298-amino-acid chain: Elongation factor Ts (298 aa).

The segment at T80–V83 is involved in Mg(2+) ion dislocation from EF-Tu.

Belongs to the EF-Ts family.

The protein resides in the cytoplasm. Functionally, associates with the EF-Tu.GDP complex and induces the exchange of GDP to GTP. It remains bound to the aminoacyl-tRNA.EF-Tu.GTP complex up to the GTP hydrolysis stage on the ribosome. The sequence is that of Elongation factor Ts from Paracidovorax citrulli (strain AAC00-1) (Acidovorax citrulli).